We begin with the raw amino-acid sequence, 432 residues long: CBL-interacting serine/threonine-protein kinase 17 (432 aa).

Residues 11–266 form the Protein kinase domain; the sequence is YELGRTLGEG…IAGIKAHDWF (256 aa). ATP contacts are provided by residues 17–25 and Lys-40; that span reads LGEGNSAKV. Asp-134 functions as the Proton acceptor in the catalytic mechanism. Residues 152 to 181 are activation loop; sequence DFGLSALSQHYREDGLLHTTCGSPNYVAPE. A Phosphoserine modification is found at Ser-156. A Phosphothreonine modification is found at Thr-170. The region spanning 301–325 is the NAF domain; that stretch reads DSPTIINAFQLIGMSSFLDLSGFFE. The interval 331 to 360 is PPI; sequence ERQIRFTSNSLAKDLLENIETIFTEMGFCL.

Belongs to the protein kinase superfamily. CAMK Ser/Thr protein kinase family. SNF1 subfamily. As to quaternary structure, interacts with CBL1. Mn(2+) is required as a cofactor.

It catalyses the reaction L-seryl-[protein] + ATP = O-phospho-L-seryl-[protein] + ADP + H(+). It carries out the reaction L-threonyl-[protein] + ATP = O-phospho-L-threonyl-[protein] + ADP + H(+). Its function is as follows. CIPK serine-threonine protein kinases interact with CBL proteins. Binding of a CBL protein to the regulatory NAF domain of CIPK protein lead to the activation of the kinase in a calcium-dependent manner. In Arabidopsis thaliana (Mouse-ear cress), this protein is CBL-interacting serine/threonine-protein kinase 17 (CIPK17).